Reading from the N-terminus, the 50-residue chain is Light-harvesting protein B-880 alpha chain (50 aa).

Residues 1-12 (MYKLWLLFDPRR) lie on the Cytoplasmic side of the membrane. Residues 13–33 (ALVALSAFLFVLALIIHFIAL) form a helical membrane-spanning segment. An a bacteriochlorophyll-binding site is contributed by histidine 29. Residues 34–50 (STDRFNWLEGKPAVKAA) are Periplasmic-facing.

The protein belongs to the antenna complex alpha subunit family. As to quaternary structure, the core complex is formed by different alpha and beta chains, binding bacteriochlorophyll molecules, and arranged most probably in tetrameric structures disposed around the reaction center. The non-pigmented gamma chains may constitute additional components.

It is found in the cell inner membrane. Functionally, antenna complexes are light-harvesting systems, which transfer the excitation energy to the reaction centers. The chain is Light-harvesting protein B-880 alpha chain from Rhodoblastus acidophilus (Rhodopseudomonas acidophila).